Consider the following 350-residue polypeptide: MTVSPVALRRKTECKPHPTARYWKKCDVEALFGLPFLDLIYQAAEIHRQNFNPREIQLSTLLSIKTGGCPEDCAYCPQSAHHNTNLGKEQMMDVDEIVEKAKIAKSRGASRFCMGAAWRGPKPKDVETVSAIIKAVKGLGMETCGTFGMLEEGMAEDLKEAGLDYYNHNLDTDPDRYNDIIHTRRHEDRMDTLGKVRNAGLKVCCGGIVGMNETRAERAGLIASLANLDPQPESVPINRLVKVEGTPLDDAEDLDWTEFVRTIAVARITMPQSYVRLSAGRSNMPEAMQAMCFMAGANSIFYGDKLLTTGNPDEDGDRILMEKLNLYPLQFELEGEVAEVEKASGIKVDY.

The Radical SAM core domain occupies Arg54–Ser278. 3 residues coordinate [4Fe-4S] cluster: Cys69, Cys73, and Cys76. Cys113, Cys144, Cys204, and Arg276 together coordinate [2Fe-2S] cluster.

Belongs to the radical SAM superfamily. Biotin synthase family. In terms of assembly, homodimer. [4Fe-4S] cluster serves as cofactor. Requires [2Fe-2S] cluster as cofactor.

The catalysed reaction is (4R,5S)-dethiobiotin + (sulfur carrier)-SH + 2 reduced [2Fe-2S]-[ferredoxin] + 2 S-adenosyl-L-methionine = (sulfur carrier)-H + biotin + 2 5'-deoxyadenosine + 2 L-methionine + 2 oxidized [2Fe-2S]-[ferredoxin]. Its pathway is cofactor biosynthesis; biotin biosynthesis; biotin from 7,8-diaminononanoate: step 2/2. In terms of biological role, catalyzes the conversion of dethiobiotin (DTB) to biotin by the insertion of a sulfur atom into dethiobiotin via a radical-based mechanism. This Neisseria meningitidis serogroup A / serotype 4A (strain DSM 15465 / Z2491) protein is Biotin synthase.